The chain runs to 271 residues: Putative phosphoenolpyruvate synthase regulatory protein (271 aa).

151 to 158 (GVSRSGKT) serves as a coordination point for ADP.

Belongs to the pyruvate, phosphate/water dikinase regulatory protein family. PSRP subfamily.

It carries out the reaction [pyruvate, water dikinase] + ADP = [pyruvate, water dikinase]-phosphate + AMP + H(+). The enzyme catalyses [pyruvate, water dikinase]-phosphate + phosphate + H(+) = [pyruvate, water dikinase] + diphosphate. Functionally, bifunctional serine/threonine kinase and phosphorylase involved in the regulation of the phosphoenolpyruvate synthase (PEPS) by catalyzing its phosphorylation/dephosphorylation. This Paraburkholderia phytofirmans (strain DSM 17436 / LMG 22146 / PsJN) (Burkholderia phytofirmans) protein is Putative phosphoenolpyruvate synthase regulatory protein.